The chain runs to 144 residues: Large ribosomal subunit protein uL16 (144 aa).

Belongs to the universal ribosomal protein uL16 family. Part of the 50S ribosomal subunit.

Functionally, binds 23S rRNA and is also seen to make contacts with the A and possibly P site tRNAs. The chain is Large ribosomal subunit protein uL16 from Erythrobacter litoralis (strain HTCC2594).